We begin with the raw amino-acid sequence, 727 residues long: Elongation factor 2 (727 aa).

Positions 19–260 (DQIRNMGICA…MAIKHLPNPL (242 aa)) constitute a tr-type G domain. GTP is bound by residues 28 to 35 (AHIDHGKT), 94 to 98 (DTPGH), and 148 to 151 (NKVD). His603 is modified (diphthamide).

The protein belongs to the TRAFAC class translation factor GTPase superfamily. Classic translation factor GTPase family. EF-G/EF-2 subfamily.

It is found in the cytoplasm. Its function is as follows. Catalyzes the GTP-dependent ribosomal translocation step during translation elongation. During this step, the ribosome changes from the pre-translocational (PRE) to the post-translocational (POST) state as the newly formed A-site-bound peptidyl-tRNA and P-site-bound deacylated tRNA move to the P and E sites, respectively. Catalyzes the coordinated movement of the two tRNA molecules, the mRNA and conformational changes in the ribosome. The sequence is that of Elongation factor 2 from Methanococcus maripaludis (strain C7 / ATCC BAA-1331).